Consider the following 283-residue polypeptide: Bifunctional protein FolD (283 aa).

NADP(+)-binding positions include 164 to 166 (GRS), serine 189, and isoleucine 230.

It belongs to the tetrahydrofolate dehydrogenase/cyclohydrolase family. In terms of assembly, homodimer.

The catalysed reaction is (6R)-5,10-methylene-5,6,7,8-tetrahydrofolate + NADP(+) = (6R)-5,10-methenyltetrahydrofolate + NADPH. It catalyses the reaction (6R)-5,10-methenyltetrahydrofolate + H2O = (6R)-10-formyltetrahydrofolate + H(+). It functions in the pathway one-carbon metabolism; tetrahydrofolate interconversion. Catalyzes the oxidation of 5,10-methylenetetrahydrofolate to 5,10-methenyltetrahydrofolate and then the hydrolysis of 5,10-methenyltetrahydrofolate to 10-formyltetrahydrofolate. The polypeptide is Bifunctional protein FolD (Lactobacillus delbrueckii subsp. bulgaricus (strain ATCC BAA-365 / Lb-18)).